Here is a 483-residue protein sequence, read N- to C-terminus: GDP-fucose protein O-fucosyltransferase 4 (483 aa).

M1 is a topological domain (cytoplasmic). The chain crosses the membrane as a helical; Signal-anchor for type II membrane protein span at residues 2 to 21 (ALCLWLFLVLPICCWCQGAV). The Lumenal segment spans residues 22–483 (DLGDSGVFQP…RARGLSNDSR (462 aa)). 2 N-linked (GlcNAc...) asparagine glycosylation sites follow: N151 and N303. Residues C374 and C377 are joined by a disulfide bond. The tract at residues 387-425 (RKAHRKNPKQNQPPQPKMANSSHMGCPLPSPGYGPVENV) is disordered. N-linked (GlcNAc...) asparagine glycosylation is found at N406, N428, N456, and N480.

This sequence belongs to the glycosyltransferase 10 family.

It is found in the endoplasmic reticulum membrane. The catalysed reaction is L-threonyl-[protein] + GDP-beta-L-fucose = 3-O-(alpha-L-fucosyl)-L-threonyl-[protein] + GDP + H(+). The enzyme catalyses L-seryl-[protein] + GDP-beta-L-fucose = 3-O-(alpha-L-fucosyl)-L-seryl-[protein] + GDP + H(+). The protein operates within protein modification; protein glycosylation. Protein O-fucosyltransferase that specifically catalyzes O-fucosylation of serine or threonine residues in EMI domains of target proteins. Attaches fucose through an O-glycosidic linkage. O-fucosylation of EMI domain-containing proteins may be required for facilitating protein folding and secretion. In Danio rerio (Zebrafish), this protein is GDP-fucose protein O-fucosyltransferase 4 (fut11).